The sequence spans 154 residues: D-aminoacyl-tRNA deacylase (154 aa).

A Gly-cisPro motif, important for rejection of L-amino acids motif is present at residues 138-139; sequence GP.

It belongs to the DTD family. Homodimer.

The protein resides in the cytoplasm. It catalyses the reaction glycyl-tRNA(Ala) + H2O = tRNA(Ala) + glycine + H(+). The enzyme catalyses a D-aminoacyl-tRNA + H2O = a tRNA + a D-alpha-amino acid + H(+). Functionally, an aminoacyl-tRNA editing enzyme that deacylates mischarged D-aminoacyl-tRNAs. Also deacylates mischarged glycyl-tRNA(Ala), protecting cells against glycine mischarging by AlaRS. Acts via tRNA-based rather than protein-based catalysis; rejects L-amino acids rather than detecting D-amino acids in the active site. By recycling D-aminoacyl-tRNA to D-amino acids and free tRNA molecules, this enzyme counteracts the toxicity associated with the formation of D-aminoacyl-tRNA entities in vivo and helps enforce protein L-homochirality. The protein is D-aminoacyl-tRNA deacylase of Halorhodospira halophila (strain DSM 244 / SL1) (Ectothiorhodospira halophila (strain DSM 244 / SL1)).